The chain runs to 211 residues: Large ribosomal subunit protein uL3 (211 aa).

Residues 122–147 (AIKRHGQSRGPMAHGSRYHRRPGSMG) form a disordered region.

It belongs to the universal ribosomal protein uL3 family. As to quaternary structure, part of the 50S ribosomal subunit. Forms a cluster with proteins L14 and L19.

Functionally, one of the primary rRNA binding proteins, it binds directly near the 3'-end of the 23S rRNA, where it nucleates assembly of the 50S subunit. In Geobacillus sp. (strain WCH70), this protein is Large ribosomal subunit protein uL3.